The sequence spans 134 residues: Small ribosomal subunit protein uS11 (134 aa).

Positions 1 to 21 (MPPKSRQGAGRKVRRKEKKNV) are disordered. The segment covering 9-21 (AGRKVRRKEKKNV) has biased composition (basic residues).

The protein belongs to the universal ribosomal protein uS11 family. Part of the 30S ribosomal subunit. Interacts with proteins S7 and S18. Binds to IF-3.

In terms of biological role, located on the platform of the 30S subunit, it bridges several disparate RNA helices of the 16S rRNA. Forms part of the Shine-Dalgarno cleft in the 70S ribosome. The sequence is that of Small ribosomal subunit protein uS11 from Thermobifida fusca (strain YX).